Consider the following 886-residue polypeptide: Neurotrophin 1 (886 aa).

The first 29 residues, 1 to 29, serve as a signal peptide directing secretion; it reads MKAGRAFGCLFWALLYCVLYLDLVSGNSA. A propeptide spanning residues 30–498 is cleaved from the precursor; that stretch reads DDELMDFDFA…FDDFSLSKKR (469 aa). Asn267 and Asn317 each carry an N-linked (GlcNAc...) asparagine glycan. Residues 321 to 340 form a disordered region; sequence FQQPSSQEEEKMASSNGGQS. N-linked (GlcNAc...) asparagine glycosylation is present at Asn353. The interval 369 to 436 is disordered; that stretch reads RNSAEETEEP…HKPVVTPPNK (68 aa). In terms of domain architecture, Spaetzle spans 508-597; it reads MCQSVVRYAR…KVPTCCSCQV (90 aa). 3 disulfide bridges follow: Cys509-Cys564, Cys546-Cys593, and Cys553-Cys595. N-linked (GlcNAc...) asparagine glycosylation is present at Asn623. Disordered stretches follow at residues 675-754 and 789-886; these read PGIS…QYHR and VSAP…QSIQ. Over residues 698–710 the composition is skewed to low complexity; the sequence is YKSSSSSSKKYYS. Over residues 797–807 the composition is skewed to pro residues; the sequence is PAPPLPMPPMP. Composition is skewed to basic residues over residues 815 to 827 and 874 to 886; these read HQAH…HHLH and SRRH…QSIQ.

Homodimer; disulfide-linked. Detected in the fan-shaped body which is a component of the locomotion center in the central nervous system (CNS) (at protein level). Expressed in the optic lobes and brain.

Its function is as follows. Neurotrophin which may function as a ligand for the Toll-related receptors Toll-7 and Tollo. Binds to Toll-7 and probably acts as its ligand in promoting motor axon targeting and neuronal survival in the central nervous system (CNS). Involved in synaptic targeting of ISNb/d motorneurons and also some SNa motorneurons. In larvae, involved in the negative regulation of the tracheal immune response to bacterial infection perhaps by acting as a ligand for the Toll-related receptor Tollo. May be involved in the normal development of specific neurons at the neuromuscular junction. The polypeptide is Neurotrophin 1 (Drosophila melanogaster (Fruit fly)).